The primary structure comprises 308 residues: Taste receptor type 2 member 107 (308 aa).

Over 1-7 (MLNSAEG) the chain is Extracellular. A helical transmembrane segment spans residues 8–28 (ILLCVVTSEAVLGVLGDTYIA). The Cytoplasmic portion of the chain corresponds to 29–43 (LFNCMDYAKNKKLSK). A helical transmembrane segment spans residues 44–64 (IGFILIGLAISRIGVVWIIIL). Topologically, residues 65–87 (QGYIQVFFPHMLTSGNITEYITY) are extracellular. Asn-80 carries an N-linked (GlcNAc...) asparagine glycan. A helical membrane pass occupies residues 88-108 (IWVFLNHLSVWFVTNLNILYF). Residues 109-125 (LKIANFSNSVFLWLKRR) are Cytoplasmic-facing. The helical transmembrane segment at 126-146 (VNAVFIFLSGCLLTSWLLCFP) threads the bilayer. Residues 147-180 (QMTKILQNSKMHQRNTSWVHQRKNYFLINQSVTN) lie on the Extracellular side of the membrane. 2 N-linked (GlcNAc...) asparagine glycosylation sites follow: Asn-161 and Asn-175. Residues 181-201 (LGIFFFIIVSLITCFLLIVFL) form a helical membrane-spanning segment. Residues 202-232 (WRHVRQMHSDVSGFRDHSTKVHVKAMKFLIS) lie on the Cytoplasmic side of the membrane. Residues 233-253 (FMVFFILHFVGLSIEVLCFIL) form a helical membrane-spanning segment. Residues 254–258 (PQNKL) lie on the Extracellular side of the membrane. The chain crosses the membrane as a helical span at residues 259–279 (LFITGLTATCLYPCGHSIIVI). The Cytoplasmic portion of the chain corresponds to 280-308 (LGNKQLKQASLKALQQLKCCETKGNFRVK).

It belongs to the G-protein coupled receptor T2R family.

It localises to the membrane. In terms of biological role, putative taste receptor which may play a role in the perception of bitterness. This is Taste receptor type 2 member 107 from Mus musculus (Mouse).